A 265-amino-acid chain; its full sequence is Probable esterase tazC (265 aa).

Active-site charge relay system residues include S119, D209, and H236.

Belongs to the LovG family.

The protein operates within secondary metabolite biosynthesis. Probable esterase; part of the gene cluster that mediates the biosynthesis of azaterrilone A and other azaphilones, a class of fungal metabolites characterized by a highly oxygenated pyrano-quinone bicyclic core and exhibiting a broad range of bioactivities. The first step of the pathway begins with the non-reducing polyketide synthase tazA that assembles one acetyl-CoA starter unit, five malonyl-CoA units, and catalyzes a series of Claisen condensations, methylation, PT-mediated cyclization, and finally releases the first hexaketide precursor through the R-domain. The tazA product then undergoes reduction on its terminal ketone and the following pyran-ring formation by yet undetermined enzyme(s). Dehydration and enoyl reduction, possibly involving the trans-enoyl reductase tazE leads to the next intermediate. TazD is predicted as an acetyltransferase and might catalyze the acetylation steps leading to the synthesis of azaterrilone A. Azaterrilone A is not the final product of the taz pathway and both the highly reducing polyketide synthase tazB and the dual enzyme tazHJ catalyze late steps of the pathway, leading to the production of the 2 final stereoisomers that contain additional polyketide modification whose structures have still to be determined. This chain is Probable esterase tazC, found in Aspergillus terreus (strain NIH 2624 / FGSC A1156).